A 228-amino-acid chain; its full sequence is 7-cyano-7-deazaguanine synthase (228 aa).

An ATP-binding site is contributed by 13 to 23 (LSGGMDSTLSS). Cys192, Cys200, Cys203, and Cys206 together coordinate Zn(2+).

Belongs to the QueC family. Zn(2+) is required as a cofactor.

The catalysed reaction is 7-carboxy-7-deazaguanine + NH4(+) + ATP = 7-cyano-7-deazaguanine + ADP + phosphate + H2O + H(+). The protein operates within purine metabolism; 7-cyano-7-deazaguanine biosynthesis. Its function is as follows. Catalyzes the ATP-dependent conversion of 7-carboxy-7-deazaguanine (CDG) to 7-cyano-7-deazaguanine (preQ(0)). The sequence is that of 7-cyano-7-deazaguanine synthase from Aliarcobacter butzleri (strain RM4018) (Arcobacter butzleri).